A 312-amino-acid chain; its full sequence is Methionyl-tRNA formyltransferase (312 aa).

Position 107 to 110 (107 to 110 (SLLP)) interacts with (6S)-5,6,7,8-tetrahydrofolate.

The protein belongs to the Fmt family.

It carries out the reaction L-methionyl-tRNA(fMet) + (6R)-10-formyltetrahydrofolate = N-formyl-L-methionyl-tRNA(fMet) + (6S)-5,6,7,8-tetrahydrofolate + H(+). In terms of biological role, attaches a formyl group to the free amino group of methionyl-tRNA(fMet). The formyl group appears to play a dual role in the initiator identity of N-formylmethionyl-tRNA by promoting its recognition by IF2 and preventing the misappropriation of this tRNA by the elongation apparatus. The protein is Methionyl-tRNA formyltransferase of Endomicrobium trichonymphae.